Here is a 59-residue protein sequence, read N- to C-terminus: Large ribosomal subunit protein uL30 (59 aa).

The protein belongs to the universal ribosomal protein uL30 family. In terms of assembly, part of the 50S ribosomal subunit.

The polypeptide is Large ribosomal subunit protein uL30 (Citrifermentans bemidjiense (strain ATCC BAA-1014 / DSM 16622 / JCM 12645 / Bem) (Geobacter bemidjiensis)).